The primary structure comprises 379 residues: Isocitrate dehydrogenase [NAD] subunit 2, mitochondrial (379 aa).

The transit peptide at 1 to 27 (MSMLSTLRTAGSLRTFSRSACYSFQRF) directs the protein to the mitochondrion. Residues R129, R139, R160, and D247 each contribute to the substrate site. Positions 247, 273, and 277 each coordinate Mg(2+).

The protein belongs to the isocitrate and isopropylmalate dehydrogenases family. Octamer of two non-identical subunits IDH1 and IDH2. Requires Mg(2+) as cofactor. The cofactor is Mn(2+).

The protein localises to the mitochondrion. It carries out the reaction D-threo-isocitrate + NAD(+) = 2-oxoglutarate + CO2 + NADH. Functionally, performs an essential role in the oxidative function of the citric acid cycle and is involved in glutamate biosynthesis. Also binds RNA; specifically to the 5'-untranslated leaders of mitochondrial mRNAs. This Schizosaccharomyces pombe (strain 972 / ATCC 24843) (Fission yeast) protein is Isocitrate dehydrogenase [NAD] subunit 2, mitochondrial (idh2).